The following is a 481-amino-acid chain: Surface lipoprotein assembly modifier 2 (481 aa).

The N-terminal stretch at Met-1–Ala-24 is a signal peptide. Residues Ala-24–Asn-192 form an N-terminal domain region. Positions Gln-193–Phe-481 are C-terminal probable beta barrel. 14 beta stranded membrane passes run Trp-194–Asn-204, Ala-223–Pro-243, Phe-248–Asn-257, Thr-271–Gln-281, Val-285–Lys-295, Leu-315–Leu-325, Trp-329–Glu-339, Tyr-353–Pro-363, Phe-368–Arg-377, Lys-390–Asp-399, Ile-404–Asn-414, Tyr-432–Arg-441, Leu-448–Lys-458, and Asn-471–Phe-481.

The protein belongs to the Slam family.

Its subcellular location is the cell outer membrane. Functionally, required for correct export to the cell surface of some cell outer membrane lipoproteins. The protein is Surface lipoprotein assembly modifier 2 of Haemophilus influenzae (strain ATCC 51907 / DSM 11121 / KW20 / Rd).